The chain runs to 386 residues: Succinate--CoA ligase [ADP-forming] subunit beta (386 aa).

The ATP-grasp domain maps to Lys9–Arg244. Residues Lys46, Gly53–Gly55, Glu99, Cys102, and Glu107 each bind ATP. Asn199 and Asp213 together coordinate Mg(2+). Substrate is bound by residues Asn264 and Gly321–Met323.

Belongs to the succinate/malate CoA ligase beta subunit family. Heterotetramer of two alpha and two beta subunits. Requires Mg(2+) as cofactor.

The catalysed reaction is succinate + ATP + CoA = succinyl-CoA + ADP + phosphate. It catalyses the reaction GTP + succinate + CoA = succinyl-CoA + GDP + phosphate. It participates in carbohydrate metabolism; tricarboxylic acid cycle; succinate from succinyl-CoA (ligase route): step 1/1. Its function is as follows. Succinyl-CoA synthetase functions in the citric acid cycle (TCA), coupling the hydrolysis of succinyl-CoA to the synthesis of either ATP or GTP and thus represents the only step of substrate-level phosphorylation in the TCA. The beta subunit provides nucleotide specificity of the enzyme and binds the substrate succinate, while the binding sites for coenzyme A and phosphate are found in the alpha subunit. This chain is Succinate--CoA ligase [ADP-forming] subunit beta, found in Rickettsia felis (strain ATCC VR-1525 / URRWXCal2) (Rickettsia azadi).